The following is a 221-amino-acid chain: MAKFNNNILLIILIIVILFIIFYFLNKNNQSNTNNNYPVSHFSSNVSRTLPVNTNVTVPTVNDCDELSENIVESLLSKYDSSMMSDRSPFHNLVQQKQQTLRSYDGPYDNDESDDRDFTYKKNKFTRRTPNDLNDLFDVNKMLPQETEEDWFDDLHMKNAKHINNTHMIHPKKHRGLDTIGSTHKNATHDLRGDIPNPKMSVSPWGNSTIEPDVFARGLCG.

An N-terminal signal peptide occupies residues methionine 1–glutamine 30.

It is found in the virion. This is an uncharacterized protein from Acanthamoeba polyphaga mimivirus (APMV).